The sequence spans 215 residues: UPF0502 protein YceH (215 aa).

The protein belongs to the UPF0502 family.

This Salmonella heidelberg (strain SL476) protein is UPF0502 protein YceH.